Reading from the N-terminus, the 941-residue chain is Pre-mRNA-processing factor 6 (941 aa).

The disordered stretch occupies residues 1–79 (MNKKKKPFLG…DEDLNDTNYD (79 aa)). Basic and acidic residues predominate over residues 39–65 (DANDPVDDRHAPPGKRTVGDQMKKNQA). Residues 66–78 (ADDDDEDLNDTNY) show a composition bias toward acidic residues. Phosphoserine is present on S143. Phosphothreonine occurs at positions 180, 266, and 275. Phosphoserine is present on S279. HAT repeat units lie at residues 384 to 416 (TDIR…LEEP), 418 to 444 (DARI…ARLE), 445 to 476 (TYEN…LEEA), 554 to 586 (NALE…FEKN), 588 to 620 (GTRE…SKWL), 622 to 654 (GDVP…LESE), 689 to 721 (GNIT…IEEQ), 723 to 755 (ELME…LEEK), and 855 to 887 (RKIT…FELQ).

As to quaternary structure, identified in the spliceosome B complex. Identified in the spliceosome C complex. Associates with the U5 snRNP particle. Component of the U4/U6-U5 tri-snRNP complex composed of the U4, U6 and U5 snRNAs and at least PRPF3, PRPF4, PRPF6, PRPF8, PRPF31, SNRNP200, TXNL4A, SNRNP40, DDX23, CD2BP2, PPIH, SNU13, EFTUD2, SART1 and USP39, LSm proteins LSm2-8 and Sm proteins. Interacts with ARAF1. Interacts with AR and NR3C1, but not ESR1, independently of the presence of hormones. Interacts with USH1G. In terms of processing, phosphorylated by PRP4K during spliceosome assembly.

The protein localises to the nucleus. The protein resides in the nucleoplasm. Its subcellular location is the nucleus speckle. Involved in pre-mRNA splicing as component of the U4/U6-U5 tri-snRNP complex, one of the building blocks of the spliceosome. Enhances dihydrotestosterone-induced transactivation activity of AR, as well as dexamethasone-induced transactivation activity of NR3C1, but does not affect estrogen-induced transactivation. In Rattus norvegicus (Rat), this protein is Pre-mRNA-processing factor 6 (Prpf6).